Reading from the N-terminus, the 367-residue chain is Indole glucosinolate O-methyltransferase 5 (367 aa).

The S-adenosyl-L-homocysteine site is built by Gly209, Asp232, Asp252, Met253, and Lys266. The Proton acceptor role is filled by His270.

It belongs to the class I-like SAM-binding methyltransferase superfamily. Cation-independent O-methyltransferase family.

Its pathway is secondary metabolite biosynthesis. In terms of biological role, involved in indole glucosinolate biosynthesis. Catalyzes methoxylation reactions of the glucosinolate indole ring. Converts the hydroxy intermediates 4-hydroxy-indol-3-yl-methylglucosinolate (4OH-I3M) and 1-hydroxy-indol-3-yl-methylglucosinolate (1OH-I3M) to 4-methoxy-indol-3-yl-methylglucosinolate (4MO-I3M) and 1-methoxy-indol-3-yl-methylglucosinolate, respectively. This chain is Indole glucosinolate O-methyltransferase 5, found in Arabidopsis thaliana (Mouse-ear cress).